A 457-amino-acid chain; its full sequence is ATP synthase subunit beta (457 aa).

147–154 serves as a coordination point for ATP; that stretch reads GGAGVGKT.

It belongs to the ATPase alpha/beta chains family. F-type ATPases have 2 components, CF(1) - the catalytic core - and CF(0) - the membrane proton channel. CF(1) has five subunits: alpha(3), beta(3), gamma(1), delta(1), epsilon(1). CF(0) has three main subunits: a(1), b(2) and c(9-12). The alpha and beta chains form an alternating ring which encloses part of the gamma chain. CF(1) is attached to CF(0) by a central stalk formed by the gamma and epsilon chains, while a peripheral stalk is formed by the delta and b chains.

The protein localises to the cell inner membrane. The enzyme catalyses ATP + H2O + 4 H(+)(in) = ADP + phosphate + 5 H(+)(out). Functionally, produces ATP from ADP in the presence of a proton gradient across the membrane. The catalytic sites are hosted primarily by the beta subunits. This Pasteurella multocida (strain Pm70) protein is ATP synthase subunit beta.